A 288-amino-acid polypeptide reads, in one-letter code: 4-diphosphocytidyl-2-C-methyl-D-erythritol kinase (288 aa).

Lys12 is a catalytic residue. Pro95–Ser105 is a binding site for ATP. Asp137 is an active-site residue.

Belongs to the GHMP kinase family. IspE subfamily.

It carries out the reaction 4-CDP-2-C-methyl-D-erythritol + ATP = 4-CDP-2-C-methyl-D-erythritol 2-phosphate + ADP + H(+). It participates in isoprenoid biosynthesis; isopentenyl diphosphate biosynthesis via DXP pathway; isopentenyl diphosphate from 1-deoxy-D-xylulose 5-phosphate: step 3/6. Its function is as follows. Catalyzes the phosphorylation of the position 2 hydroxy group of 4-diphosphocytidyl-2C-methyl-D-erythritol. This chain is 4-diphosphocytidyl-2-C-methyl-D-erythritol kinase, found in Halorhodospira halophila (strain DSM 244 / SL1) (Ectothiorhodospira halophila (strain DSM 244 / SL1)).